Reading from the N-terminus, the 571-residue chain is Putative pyruvate decarboxylase C13A11.06 (571 aa).

Pyruvate-binding residues include Asp29 and His118. Thiamine diphosphate is bound by residues Thr395 and 418–420; that span reads GSI. Position 450 (Asp450) interacts with Mg(2+). Residues 451–452 and 477–482 contribute to the thiamine diphosphate site; these read GS and NDGYTI. Positions 477 and 479 each coordinate Mg(2+). Glu483 serves as a coordination point for pyruvate.

It belongs to the TPP enzyme family. As to quaternary structure, homotetramer. Requires Mg(2+) as cofactor. Thiamine diphosphate is required as a cofactor.

The catalysed reaction is a 2-oxocarboxylate + H(+) = an aldehyde + CO2. It catalyses the reaction pyruvate + H(+) = acetaldehyde + CO2. This chain is Putative pyruvate decarboxylase C13A11.06, found in Schizosaccharomyces pombe (strain 972 / ATCC 24843) (Fission yeast).